The primary structure comprises 116 residues: Aspartate 1-decarboxylase (116 aa).

Serine 25 serves as the catalytic Schiff-base intermediate with substrate; via pyruvic acid. A Pyruvic acid (Ser) modification is found at serine 25. Threonine 57 lines the substrate pocket. Tyrosine 58 acts as the Proton donor in catalysis. Residue 72 to 74 (GAA) participates in substrate binding.

Belongs to the PanD family. In terms of assembly, heterooctamer of four alpha and four beta subunits. It depends on pyruvate as a cofactor. Is synthesized initially as an inactive proenzyme, which is activated by self-cleavage at a specific serine bond to produce a beta-subunit with a hydroxyl group at its C-terminus and an alpha-subunit with a pyruvoyl group at its N-terminus.

It is found in the cytoplasm. The enzyme catalyses L-aspartate + H(+) = beta-alanine + CO2. It functions in the pathway cofactor biosynthesis; (R)-pantothenate biosynthesis; beta-alanine from L-aspartate: step 1/1. Its function is as follows. Catalyzes the pyruvoyl-dependent decarboxylation of aspartate to produce beta-alanine. This Helicobacter pylori (strain HPAG1) protein is Aspartate 1-decarboxylase.